The sequence spans 332 residues: Pyrroline-5-carboxylate reductase (332 aa).

Belongs to the pyrroline-5-carboxylate reductase family.

The catalysed reaction is L-proline + NADP(+) = (S)-1-pyrroline-5-carboxylate + NADPH + 2 H(+). The enzyme catalyses L-proline + NAD(+) = (S)-1-pyrroline-5-carboxylate + NADH + 2 H(+). It functions in the pathway amino-acid biosynthesis; L-proline biosynthesis; L-proline from L-glutamate 5-semialdehyde: step 1/1. This Neurospora crassa (strain ATCC 24698 / 74-OR23-1A / CBS 708.71 / DSM 1257 / FGSC 987) protein is Pyrroline-5-carboxylate reductase (pro-1).